The chain runs to 723 residues: Tryptophan 2-monooxygenase (723 aa).

FMN contacts are provided by Ser218, Glu238, Arg246, and Arg266. Arg266 contacts substrate.

This sequence belongs to the tryptophan 2-monooxygenase family. FMN is required as a cofactor.

It catalyses the reaction L-tryptophan + O2 = indole-3-acetamide + CO2 + H2O. It functions in the pathway plant hormone metabolism; auxin biosynthesis. The sequence is that of Tryptophan 2-monooxygenase (iaaM) from Allorhizobium ampelinum (strain ATCC BAA-846 / DSM 112012 / S4) (Agrobacterium vitis (strain S4)).